The chain runs to 150 residues: 3-dehydroquinate dehydratase (150 aa).

Residue Tyr26 is the Proton acceptor of the active site. Residues Asn77, His83, and Asp90 each coordinate substrate. His103 serves as the catalytic Proton donor. Substrate contacts are provided by residues Leu104–Ser105 and Arg114.

This sequence belongs to the type-II 3-dehydroquinase family. In terms of assembly, homododecamer.

The catalysed reaction is 3-dehydroquinate = 3-dehydroshikimate + H2O. The protein operates within metabolic intermediate biosynthesis; chorismate biosynthesis; chorismate from D-erythrose 4-phosphate and phosphoenolpyruvate: step 3/7. In terms of biological role, catalyzes a trans-dehydration via an enolate intermediate. The protein is 3-dehydroquinate dehydratase of Photorhabdus laumondii subsp. laumondii (strain DSM 15139 / CIP 105565 / TT01) (Photorhabdus luminescens subsp. laumondii).